The sequence spans 115 residues: EVKLEESGGGLVQPGGSMKLSCVASGFTFSNYWMNWVRQSPEKGLEWVAEIRLKSHNYATHYAESVKGRFTISRDDSKSSVYLRMNNLRPEDTGIYYCTTGFAYWGQGTLVTVSA.

In terms of domain architecture, Ig-like spans 1-114 (EVKLEESGGG…WGQGTLVTVS (114 aa)). A disulfide bond links Cys-22 and Cys-98.

The sequence is that of Ig heavy chain V-III region W3082 from Mus musculus (Mouse).